The sequence spans 326 residues: tRNA-modifying protein YgfZ (326 aa).

Residues W27 and W189 each coordinate folate.

The protein belongs to the tRNA-modifying YgfZ family.

It localises to the cytoplasm. Functionally, folate-binding protein involved in regulating the level of ATP-DnaA and in the modification of some tRNAs. It is probably a key factor in regulatory networks that act via tRNA modification, such as initiation of chromosomal replication. This is tRNA-modifying protein YgfZ from Shigella sonnei (strain Ss046).